The following is a 97-amino-acid chain: Sorbitol dehydrogenase (97 aa).

Residue Cys-44 coordinates Zn(2+). Tyr-50 is a binding site for substrate. The Zn(2+) site is built by His-69 and Glu-70.

The protein belongs to the zinc-containing alcohol dehydrogenase family. In terms of assembly, homotetramer. Zn(2+) is required as a cofactor.

It is found in the mitochondrion membrane. Its subcellular location is the cell projection. The protein localises to the cilium. It localises to the flagellum. It carries out the reaction xylitol + NAD(+) = D-xylulose + NADH + H(+). The enzyme catalyses L-iditol + NAD(+) = keto-L-sorbose + NADH + H(+). It catalyses the reaction keto-D-fructose + NADH + H(+) = D-sorbitol + NAD(+). Functionally, polyol dehydrogenase that catalyzes the reversible NAD(+)-dependent oxidation of various sugar alcohols. Is active with xylitol, L-iditol and D-sorbitol (D-glucitol) as substrates, leading to the C2-oxidized products D-xylulose, L-sorbose and D-fructose, respectively. Is a key enzyme in the polyol pathway that interconverts glucose and fructose via sorbitol, which constitutes an important alternate route for glucose metabolism. May play a role in sperm motility by using sorbitol as an alternative energy source for sperm motility. This chain is Sorbitol dehydrogenase (SORD), found in Sus scrofa (Pig).